A 61-amino-acid chain; its full sequence is Small ribosomal subunit protein uS14 (61 aa).

Positions 24, 27, 40, and 43 each coordinate Zn(2+).

It belongs to the universal ribosomal protein uS14 family. Zinc-binding uS14 subfamily. In terms of assembly, part of the 30S ribosomal subunit. Contacts proteins S3 and S10. It depends on Zn(2+) as a cofactor.

Binds 16S rRNA, required for the assembly of 30S particles and may also be responsible for determining the conformation of the 16S rRNA at the A site. This is Small ribosomal subunit protein uS14 from Desulforamulus reducens (strain ATCC BAA-1160 / DSM 100696 / MI-1) (Desulfotomaculum reducens).